The primary structure comprises 270 residues: Ethanolamine ammonia-lyase small subunit (270 aa).

V161, E182, and C211 together coordinate adenosylcob(III)alamin.

This sequence belongs to the EutC family. The basic unit is a heterodimer which dimerizes to form tetramers. The heterotetramers trimerize; 6 large subunits form a core ring with 6 small subunits projecting outwards. The cofactor is adenosylcob(III)alamin.

It is found in the bacterial microcompartment. It carries out the reaction ethanolamine = acetaldehyde + NH4(+). Its pathway is amine and polyamine degradation; ethanolamine degradation. Catalyzes the deamination of various vicinal amino-alcohols to oxo compounds. Allows this organism to utilize ethanolamine as the sole source of nitrogen and carbon in the presence of external vitamin B12. The polypeptide is Ethanolamine ammonia-lyase small subunit (Azotobacter vinelandii (strain DJ / ATCC BAA-1303)).